Here is a 229-residue protein sequence, read N- to C-terminus: Ras-related protein Rab-33B (229 aa).

Positions 43, 44, 45, 46, 47, 48, 62, and 65 each coordinate GTP. Threonine 47 provides a ligand contact to Mg(2+). Positions 56–68 match the Switch 1 motif; that stretch reads GRFPDRTEATIGV. Mg(2+) is bound by residues threonine 65 and aspartate 88. Residues 89-108 carry the Switch 2 motif; sequence TAGQERFRKSMVQHYYRNVH. 6 residues coordinate GTP: glycine 91, asparagine 148, lysine 149, aspartate 151, alanine 179, and lysine 180. 2 S-geranylgeranyl cysteine lipidation sites follow: cysteine 227 and cysteine 229. Cysteine 229 is subject to Cysteine methyl ester.

This sequence belongs to the small GTPase superfamily. Rab family. In terms of assembly, interacts (GTP- and GDP-bound forms) with ATG16L1; the complex consists of a tetramer where two RAB33B molecules bind independently one molecule of the ATG16L1 homodimer; the interaction promotes ATG12-ATG5-ATG16L1 complex recruitment to phagophores. Interacts with ATG16L2; however interaction is approximately hundred times lower than for ATG16L1. Interacts with RIC1 (via C-terminus domain); the interaction is direct with a preference for RAB33B-GTP. Interacts with RGP1. Requires Mg(2+) as cofactor. Prenylated.

The protein localises to the golgi apparatus membrane. It localises to the golgi apparatus. The protein resides in the cis-Golgi network. Its subcellular location is the preautophagosomal structure membrane. The catalysed reaction is GTP + H2O = GDP + phosphate + H(+). Regulated by guanine nucleotide exchange factors (GEFs) which promote the exchange of bound GDP for free GTP. Regulated by GTPase activating proteins (GAPs) such as SGSM2 which increase the GTP hydrolysis activity. Inhibited by GDP dissociation inhibitors (GDIs). The small GTPases Rab are key regulators of intracellular membrane trafficking, from the formation of transport vesicles to their fusion with membranes. Rabs cycle between an inactive GDP-bound form and an active GTP-bound form that is able to recruit to membranes different sets of downstream effectors directly responsible for vesicle formation, movement, tethering and fusion. RAB33B acts, in coordination with RAB6A, to regulate intra-Golgi retrograde trafficking. Participates in autophagosome formation by recruiting the ATG12-ATG5-ATG16L1 complex to phagophores, probably in a nucleotide-independent manner. The chain is Ras-related protein Rab-33B from Homo sapiens (Human).